Reading from the N-terminus, the 322-residue chain is Short chain dehydrogenase AOL_s00215g274 (322 aa).

NAD(+) is bound by residues 47–48 (AV), 104–106 (IAV), 197–201 (YNVSK), and 230–232 (VAT). Y197 acts as the Proton acceptor in catalysis.

It belongs to the short-chain dehydrogenases/reductases (SDR) family.

Its pathway is secondary metabolite biosynthesis; terpenoid biosynthesis. Short chain dehydrogenase; part of the gene cluster that mediates the biosynthesis of sesquiterpenyl epoxy-cyclohexenoids (SECs) such as anthrobotrisins and arthrosporols, metabolites that possess a novel hybrid carbon skeleton consisting of a polyketide-derived epoxycyclohexenol combined with a terpenoid-derived monocyclic sesquiterpenol substructure (PKS-PTS hybrid). The SEC pathway plays an important role for fungal soil colonization via decreasing fungal nematode-capturing ability. Within the pathway, the cytochrome P450 monooxygenase AOL_s00215g274 is involved in specific regional ketone reductions at C-4 of farnesyl epoxy-quinone. The pathway begins with the biosynthesis of 6-methylsalicylic acid (6-MSA), the first precursor of the polyketide-derived epoxycyclohexenol in arthrosporols, by the polyketide synthase (PKS) AOL_s00215g283 via condensation of 1 acetate and 3 malonate units. The 6-methylsalicylic acid decarboxylase AOL_s00215g281 then catalyzes the decarboxylation of 6-methylsalicylic acid to yield m-cresol. The cytochrome P450 monooxygenase AOL_s00215g282 further oxidizes m-cresol to yield toluquinol. With the assistance of the oxidoreductase AOL_s00215g277, the polyprenyl transferase AOL_s00215g276 catalyzes the farnesylation of toluquinol to produce farnesyl hydroquinone, the hybrid precursor for biosynthesis of SECs. Farnesyl hydroquinone undergoes epoxidation and then subsequent dehydrogenation to form farnesyl epoxy-quinone, the first and simplest SEC. The cytochrome P450 monooxygenase AOL_s00215g278 and the FAD-dependent monooxygenase AOL_s00215g279 might be involved in the oxygenation of the phenol moiety, most likely in the epoxy formation. The cytochrome P450 monooxygenases AOL_s00215g274 and AOL_s00215g280 are involved in specific regional ketone reductions at respectively C-4 and C-1 of farnesyl epoxy-quinone PubMed:33823587. This Arthrobotrys oligospora (strain ATCC 24927 / CBS 115.81 / DSM 1491) (Nematode-trapping fungus) protein is Short chain dehydrogenase AOL_s00215g274.